Reading from the N-terminus, the 208-residue chain is 3-isopropylmalate dehydratase small subunit 2 (208 aa).

Belongs to the LeuD family. LeuD type 1 subfamily. As to quaternary structure, heterodimer of LeuC and LeuD.

The catalysed reaction is (2R,3S)-3-isopropylmalate = (2S)-2-isopropylmalate. The protein operates within amino-acid biosynthesis; L-leucine biosynthesis; L-leucine from 3-methyl-2-oxobutanoate: step 2/4. Functionally, catalyzes the isomerization between 2-isopropylmalate and 3-isopropylmalate, via the formation of 2-isopropylmaleate. The polypeptide is 3-isopropylmalate dehydratase small subunit 2 (Salmonella choleraesuis (strain SC-B67)).